A 69-amino-acid chain; its full sequence is Putative membrane protein insertion efficiency factor (69 aa).

It belongs to the UPF0161 family.

It is found in the cell membrane. Its function is as follows. Could be involved in insertion of integral membrane proteins into the membrane. This is Putative membrane protein insertion efficiency factor from Clostridium botulinum (strain Okra / Type B1).